A 105-amino-acid polypeptide reads, in one-letter code: Putative neurotoxin 10 (105 aa).

The N-terminal stretch at 1–21 is a signal peptide; sequence MTVSCSKVLLSLCLFLMLLKA.

This sequence belongs to the scolopendra neurotoxin 10 family. Post-translationally, contains 3 disulfide bonds. As to expression, expressed by the venom gland.

It localises to the secreted. This chain is Putative neurotoxin 10, found in Scolopendra subspinipes (Vietnamese centipede).